A 122-amino-acid chain; its full sequence is Large ribosomal subunit protein uL14 (122 aa).

This sequence belongs to the universal ribosomal protein uL14 family. In terms of assembly, part of the 50S ribosomal subunit. Forms a cluster with proteins L3 and L19. In the 70S ribosome, L14 and L19 interact and together make contacts with the 16S rRNA in bridges B5 and B8.

Its function is as follows. Binds to 23S rRNA. Forms part of two intersubunit bridges in the 70S ribosome. This Geotalea daltonii (strain DSM 22248 / JCM 15807 / FRC-32) (Geobacter daltonii) protein is Large ribosomal subunit protein uL14.